The following is a 1031-amino-acid chain: Telomerase reverse transcriptase (1031 aa).

The Reverse transcriptase domain maps to 498–852 (KEVEEWKKSL…DYCDWIGISI (355 aa)). Positions 603, 781, and 782 each coordinate Mg(2+).

Belongs to the reverse transcriptase family. Telomerase subfamily. As to quaternary structure, component of the telomerase holoenzyme complex composed minimally of the catalytic subunit p123 and the telomerase RNA template component.

The protein resides in the nucleus. The protein localises to the chromosome. It is found in the telomere. It catalyses the reaction DNA(n) + a 2'-deoxyribonucleoside 5'-triphosphate = DNA(n+1) + diphosphate. Telomerase is a ribonucleoprotein enzyme essential for the replication of chromosome termini in most eukaryotes. It elongates telomeres. It is a reverse transcriptase that adds simple sequence repeats to chromosome ends by copying a template sequence within the RNA component of the enzyme. The sequence is that of Telomerase reverse transcriptase from Euplotes aediculatus (Ciliate).